A 367-amino-acid polypeptide reads, in one-letter code: Phospho-N-acetylmuramoyl-pentapeptide-transferase (367 aa).

10 consecutive transmembrane segments (helical) span residues Leu16–Phe36, Thr62–Val82, Met87–Leu107, Phe125–Tyr145, Val158–Ile178, Ser190–Ala210, Leu214–Tyr234, Gln240–Leu260, Gln264–Ile284, and Phe326–Ser346.

This sequence belongs to the glycosyltransferase 4 family. MraY subfamily. Mg(2+) serves as cofactor.

The protein resides in the cell membrane. It carries out the reaction UDP-N-acetyl-alpha-D-muramoyl-L-alanyl-gamma-D-glutamyl-meso-2,6-diaminopimeloyl-D-alanyl-D-alanine + di-trans,octa-cis-undecaprenyl phosphate = di-trans,octa-cis-undecaprenyl diphospho-N-acetyl-alpha-D-muramoyl-L-alanyl-D-glutamyl-meso-2,6-diaminopimeloyl-D-alanyl-D-alanine + UMP. The protein operates within cell wall biogenesis; peptidoglycan biosynthesis. Catalyzes the initial step of the lipid cycle reactions in the biosynthesis of the cell wall peptidoglycan: transfers peptidoglycan precursor phospho-MurNAc-pentapeptide from UDP-MurNAc-pentapeptide onto the lipid carrier undecaprenyl phosphate, yielding undecaprenyl-pyrophosphoryl-MurNAc-pentapeptide, known as lipid I. This is Phospho-N-acetylmuramoyl-pentapeptide-transferase from Chloroflexus aggregans (strain MD-66 / DSM 9485).